Consider the following 159-residue polypeptide: Phosphopantetheine adenylyltransferase (159 aa).

T10 contacts substrate. ATP contacts are provided by residues 10–11 (TF) and H18. 3 residues coordinate substrate: K42, M74, and R88. Residues 89–91 (GLR), E99, and 124–130 (WSFISSS) contribute to the ATP site.

It belongs to the bacterial CoaD family. Homohexamer. Mg(2+) is required as a cofactor.

It localises to the cytoplasm. It catalyses the reaction (R)-4'-phosphopantetheine + ATP + H(+) = 3'-dephospho-CoA + diphosphate. The protein operates within cofactor biosynthesis; coenzyme A biosynthesis; CoA from (R)-pantothenate: step 4/5. Reversibly transfers an adenylyl group from ATP to 4'-phosphopantetheine, yielding dephospho-CoA (dPCoA) and pyrophosphate. The protein is Phosphopantetheine adenylyltransferase of Shigella sonnei (strain Ss046).